Here is an 83-residue protein sequence, read N- to C-terminus: Toxin BmKBT (83 aa).

Positions 1-19 are cleaved as a signal peptide; it reads MKAALLLVIFSLMLIGVLT. The region spanning 21–81 is the LCN-type CS-alpha/beta domain; it reads KSGYPTDHEG…TWSRATNKCR (61 aa). 4 disulfides stabilise this stretch: Cys31/Cys80, Cys35/Cys54, Cys41/Cys61, and Cys45/Cys63. Lys83 is a propeptide (removed by a carboxypeptidase).

Belongs to the long (4 C-C) scorpion toxin superfamily. Sodium channel inhibitor family. Beta subfamily. Expressed by the venom gland.

The protein localises to the secreted. Its function is as follows. This toxin increases the peak sodium current, slows down the inactivation of sodium channels (Nav), and prolongs the action potential of dorsal root ganglion neurons, which indicates that it behaves as a classical alpha-toxin. It binds to mammal brain and insect sodium channels, but with a different manner. This peptide may bind to a distinct receptor site on mammal brain sodium channels, which is unconnected with that for BmKAS (a beta-toxin), BmKIT2 (a beta-toxin) or BmK I (an alpha toxin). In contrast, the receptor site for BmKabT on insect sodium channels might be closely related to that for the beta-insect depressant toxin BmKIT2. Possesses potent toxicity in mice but induces only paralysis in cotton bollworm. This is Toxin BmKBT from Olivierus martensii (Manchurian scorpion).